The chain runs to 303 residues: ATP synthase gamma chain (303 aa).

This sequence belongs to the ATPase gamma chain family. In terms of assembly, F-type ATPases have 2 components, CF(1) - the catalytic core - and CF(0) - the membrane proton channel. CF(1) has five subunits: alpha(3), beta(3), gamma(1), delta(1), epsilon(1). CF(0) has three main subunits: a, b and c.

The protein localises to the cell inner membrane. Functionally, produces ATP from ADP in the presence of a proton gradient across the membrane. The gamma chain is believed to be important in regulating ATPase activity and the flow of protons through the CF(0) complex. This Bartonella quintana (strain Toulouse) (Rochalimaea quintana) protein is ATP synthase gamma chain.